Consider the following 576-residue polypeptide: Deformed epidermal autoregulatory factor 1 (576 aa).

3 disordered regions span residues 52–76 (VTSS…GGGN), 189–215 (AGGA…NPST), and 309–362 (ESAS…SGSG). 2 stretches are compositionally biased toward gly residues: residues 61 to 76 (GSGG…GGGN) and 191 to 207 (GASG…GGSS). The SAND domain maps to 210–291 (SENPSTQHNE…QSLIDEGTLT (82 aa)). Residues 324-340 (RKRNQTDLDMESGPKRK) carry the Nuclear localization signal motif. Residues 345–362 (HSNNNNSNTNNNNTSGSG) show a composition bias toward low complexity. Zn(2+) contacts are provided by Cys521, Cys524, Cys532, Cys535, Cys541, Cys545, His553, and Cys557. An MYND-type zinc finger spans residues 521-557 (CANCNREALAECSLCRKTPYCSEFCQRKDWNAHQVEC).

It is found in the nucleus. Its function is as follows. Transcription factor that binds the homeotic Deformed (Dfd) response element. High affinity binding sites contain at least 1 TTCG motif surrounded by additional TCG sequences. May be involved in the selective action of Dfd on these sites without binding directly to the Dfd protein. Requirement of DEAF1 activity may be a common feature of enhancers targeted by Dfd. This is Deformed epidermal autoregulatory factor 1 (Deaf1) from Drosophila melanogaster (Fruit fly).